The following is a 389-amino-acid chain: Tryptophan synthase beta chain (389 aa).

Lys-84 bears the N6-(pyridoxal phosphate)lysine mark.

Belongs to the TrpB family. As to quaternary structure, tetramer of two alpha and two beta chains. Pyridoxal 5'-phosphate serves as cofactor.

The enzyme catalyses (1S,2R)-1-C-(indol-3-yl)glycerol 3-phosphate + L-serine = D-glyceraldehyde 3-phosphate + L-tryptophan + H2O. The protein operates within amino-acid biosynthesis; L-tryptophan biosynthesis; L-tryptophan from chorismate: step 5/5. In terms of biological role, the beta subunit is responsible for the synthesis of L-tryptophan from indole and L-serine. The sequence is that of Tryptophan synthase beta chain from Clostridium novyi (strain NT).